The primary structure comprises 449 residues: Flavonol 7-O-beta-glucosyltransferase UGT74F1 (449 aa).

Histidine 18 functions as the Proton acceptor in the catalytic mechanism. An an anthocyanidin-binding site is contributed by histidine 18. Aspartate 111 acts as the Charge relay in catalysis. UDP-alpha-D-glucose-binding residues include threonine 133, glutamine 327, histidine 342, tryptophan 345, asparagine 346, serine 347, glutamate 350, aspartate 366, and glutamine 367.

This sequence belongs to the UDP-glycosyltransferase family.

The catalysed reaction is a 7-O-hydroxy-flavonol + UDP-alpha-D-glucose = a flavonol 7-O-beta-D-glucoside + UDP + H(+). Possesses quercetin 7-O-glucosyltransferase and 4'-O-glucosyltransferase activities in vitro. Also active in vitro on benzoates and benzoate derivatives. Has low affinity for the tryptophan precursor anthranilate. Catalyzes the formation of anthranilate glucose ester. Is a minor source of this activity in the plant. In Arabidopsis thaliana (Mouse-ear cress), this protein is Flavonol 7-O-beta-glucosyltransferase UGT74F1.